The following is a 632-amino-acid chain: tRNA uridine 5-carboxymethylaminomethyl modification enzyme MnmG (632 aa).

Residues 15–20 (GAGHAG), Ile-127, and Ser-182 each bind FAD. 276 to 290 (GPRYCPSIEDKIVRF) is an NAD(+) binding site. Gln-373 serves as a coordination point for FAD.

It belongs to the MnmG family. Homodimer. Heterotetramer of two MnmE and two MnmG subunits. Requires FAD as cofactor.

Its subcellular location is the cytoplasm. NAD-binding protein involved in the addition of a carboxymethylaminomethyl (cmnm) group at the wobble position (U34) of certain tRNAs, forming tRNA-cmnm(5)s(2)U34. The sequence is that of tRNA uridine 5-carboxymethylaminomethyl modification enzyme MnmG from Streptococcus pyogenes serotype M6 (strain ATCC BAA-946 / MGAS10394).